The following is a 546-amino-acid chain: Alkaline phosphatase PafA (546 aa).

The N-terminal stretch at 1-25 (MLTPKKWLLGVLVVSGMLGAQKTNA) is a signal peptide. Residues aspartate 38 and threonine 79 each coordinate Zn(2+). Threonine 79 functions as the Phosphothreonine intermediate in the catalytic mechanism. Residues asparagine 100 and 162-164 (KDR) contribute to the substrate site. The Zn(2+) site is built by aspartate 305, histidine 309, aspartate 352, histidine 353, and histidine 486.

Zn(2+) is required as a cofactor.

Its subcellular location is the periplasm. It carries out the reaction a phosphate monoester + H2O = an alcohol + phosphate. Its activity is regulated as follows. Strongly inhibited by orthovanadate and EDTA. Also inhibited by inorganic phosphate. Its function is as follows. Alkaline phosphatase with broad substrate specificity. Has phosphatase activity towards nucleotide phosphates with a preference for ATP. Active towards a great variety of phosphomonoesters with the exception of 2',3'-cyclic AMP and myo-inositol hexakisphosphate. The sequence is that of Alkaline phosphatase PafA from Elizabethkingia meningoseptica (Chryseobacterium meningosepticum).